The primary structure comprises 242 residues: MTHSPLAQFDIKKLIDIKMFGFDVSFTNSSIYMLLASILALTYFYLAFYNRKLVPSRLQVSAEIVYNLVADMLNQNIGVKGRKFIPLVFSLFIFILFCNLLGMTPYSFTATSHIIVTFTLAILVFLIVTIVGFVKHGLRFLTLFLPHGTPLWLAPLIIVIELFTYLARPVSLSLRLAANMMAGHVLLKVIAGFTVSLMIYLKFLPIPIMVILIGFEIFVAILQAYIFTILSCMYLNDAINLH.

6 consecutive transmembrane segments (helical) span residues serine 29–tyrosine 49, phenylalanine 84–threonine 104, isoleucine 114–valine 134, phenylalanine 140–isoleucine 160, methionine 181–leucine 201, and phenylalanine 203–glutamine 223.

This sequence belongs to the ATPase A chain family. F-type ATPases have 2 components, CF(1) - the catalytic core - and CF(0) - the membrane proton channel. CF(1) has five subunits: alpha(3), beta(3), gamma(1), delta(1), epsilon(1). CF(0) has three main subunits: a(1), b(2) and c(9-12). The alpha and beta chains form an alternating ring which encloses part of the gamma chain. CF(1) is attached to CF(0) by a central stalk formed by the gamma and epsilon chains, while a peripheral stalk is formed by the delta and b chains.

The protein localises to the cell inner membrane. In terms of biological role, key component of the proton channel; it plays a direct role in the translocation of protons across the membrane. In Rickettsia peacockii (strain Rustic), this protein is ATP synthase subunit a.